The sequence spans 420 residues: Tyrosine-protein phosphatase non-receptor type 20 (420 aa).

A compositionally biased stretch (basic and acidic residues) spans 1-11 (MSSPRDFRAEP). Disordered stretches follow at residues 1 to 47 (MSSP…VFEN) and 68 to 108 (DVFE…SQAL). Over residues 31–41 (LPSSSQENTPR) the composition is skewed to polar residues. Phosphoserine occurs at positions 76 and 120. In terms of domain architecture, Tyrosine-protein phosphatase spans 159 to 412 (IMQEFMALEL…HFCYDIVLEV (254 aa)). Substrate contacts are provided by residues aspartate 323, 353–359 (CSAGIGR), and glutamine 397. Cysteine 353 serves as the catalytic Phosphocysteine intermediate.

This sequence belongs to the protein-tyrosine phosphatase family. Non-receptor class subfamily. Present in many cell lines (at protein level). Widely expressed.

It localises to the nucleus. The protein resides in the cytoplasm. The protein localises to the cytoskeleton. It is found in the microtubule organizing center. Its subcellular location is the centrosome. The catalysed reaction is O-phospho-L-tyrosyl-[protein] + H2O = L-tyrosyl-[protein] + phosphate. Functionally, tyrosine-protein phosphatase targeted to sites of actin polymerization in response of varied extracellular stimuli. Has tyrosine phosphatase activity towards various tyrosyl phosphorylated substrates. This is Tyrosine-protein phosphatase non-receptor type 20 from Homo sapiens (Human).